Consider the following 177-residue polypeptide: uncharacterized protein (177 aa).

Residues 100–115 (QVQPHQQTHQQSQQTH) are compositionally biased toward low complexity. Residues 100–135 (QVQPHQQTHQQSQQTHNKTVANSGDPPPPPPSQPNK) are disordered. Residues 141–158 (WIVGMVIGVVVLYLLYRY) traverse the membrane as a helical segment.

Its subcellular location is the membrane. This is an uncharacterized protein from Aedes vexans (Inland floodwater mosquito).